The sequence spans 379 residues: Chaperone protein DnaJ (379 aa).

The region spanning 5-70 (DYYEVLGVGK…EKKAAYDQYG (66 aa)) is the J domain. The CR-type zinc finger occupies 139–217 (GHEAQIRVPH…CHGQGKLKSQ (79 aa)). Zn(2+) contacts are provided by cysteine 152, cysteine 155, cysteine 169, cysteine 172, cysteine 191, cysteine 194, cysteine 205, and cysteine 208. 4 CXXCXGXG motif repeats span residues 152-159 (CEHCHGNG), 169-176 (CPTCNGVG), 191-198 (CPKCHGSG), and 205-212 (CTKCHGQG).

This sequence belongs to the DnaJ family. Homodimer. Zn(2+) is required as a cofactor.

It localises to the cytoplasm. Functionally, participates actively in the response to hyperosmotic and heat shock by preventing the aggregation of stress-denatured proteins and by disaggregating proteins, also in an autonomous, DnaK-independent fashion. Unfolded proteins bind initially to DnaJ; upon interaction with the DnaJ-bound protein, DnaK hydrolyzes its bound ATP, resulting in the formation of a stable complex. GrpE releases ADP from DnaK; ATP binding to DnaK triggers the release of the substrate protein, thus completing the reaction cycle. Several rounds of ATP-dependent interactions between DnaJ, DnaK and GrpE are required for fully efficient folding. Also involved, together with DnaK and GrpE, in the DNA replication of plasmids through activation of initiation proteins. The protein is Chaperone protein DnaJ of Cupriavidus metallidurans (strain ATCC 43123 / DSM 2839 / NBRC 102507 / CH34) (Ralstonia metallidurans).